Consider the following 210-residue polypeptide: Uridine kinase (210 aa).

ATP is bound at residue 13–20 (GGSGSGKT).

Belongs to the uridine kinase family.

The protein localises to the cytoplasm. It carries out the reaction uridine + ATP = UMP + ADP + H(+). The catalysed reaction is cytidine + ATP = CMP + ADP + H(+). It functions in the pathway pyrimidine metabolism; CTP biosynthesis via salvage pathway; CTP from cytidine: step 1/3. Its pathway is pyrimidine metabolism; UMP biosynthesis via salvage pathway; UMP from uridine: step 1/1. The sequence is that of Uridine kinase from Oceanobacillus iheyensis (strain DSM 14371 / CIP 107618 / JCM 11309 / KCTC 3954 / HTE831).